A 91-amino-acid polypeptide reads, in one-letter code: Histone H1, sperm (91 aa).

The interval 1-25 (PGSPQKRAASPRKSPRKGSPKKSPM) is disordered. The span at 9 to 20 (ASPRKSPRKGSP) shows a compositional bias: basic residues. The region spanning 18 to 91 (GSPKKSPMIR…TGATGRFRVG (74 aa)) is the H15 domain.

This sequence belongs to the histone H1/H5 family.

It localises to the nucleus. It is found in the chromosome. In terms of biological role, histones H1 are necessary for the condensation of nucleosome chains into higher-order structures. This chain is Histone H1, sperm, found in Sphaerechinus granularis (Purple sea urchin).